The primary structure comprises 158 residues: Small ribosomal subunit protein uS7 (158 aa).

It belongs to the universal ribosomal protein uS7 family. In terms of assembly, part of the 30S ribosomal subunit. Contacts proteins S9 and S11.

Its function is as follows. One of the primary rRNA binding proteins, it binds directly to 16S rRNA where it nucleates assembly of the head domain of the 30S subunit. Is located at the subunit interface close to the decoding center, probably blocks exit of the E-site tRNA. In Leptospira biflexa, this protein is Small ribosomal subunit protein uS7.